The primary structure comprises 169 residues: Fumarase E (169 aa).

The protein belongs to the MtlR/FumE family. In terms of assembly, homodimer.

The catalysed reaction is (S)-malate = fumarate + H2O. In vitro catalyzes the addition of water to fumarate, forming malate. Cannot catalyze the reverse reaction. Cannot use the cis-isomer maleate as substrate. The protein is Fumarase E of Shigella flexneri.